We begin with the raw amino-acid sequence, 338 residues long: CRISPR-associated endonuclease Cas1 (338 aa).

E165, H230, and E245 together coordinate Mn(2+).

This sequence belongs to the CRISPR-associated endonuclease Cas1 family. Homodimer, forms a heterotetramer with a Cas2 homodimer. It depends on Mg(2+) as a cofactor. Requires Mn(2+) as cofactor.

In terms of biological role, CRISPR (clustered regularly interspaced short palindromic repeat), is an adaptive immune system that provides protection against mobile genetic elements (viruses, transposable elements and conjugative plasmids). CRISPR clusters contain spacers, sequences complementary to antecedent mobile elements, and target invading nucleic acids. CRISPR clusters are transcribed and processed into CRISPR RNA (crRNA). Acts as a dsDNA endonuclease. Involved in the integration of spacer DNA into the CRISPR cassette. The chain is CRISPR-associated endonuclease Cas1 from Fusobacterium nucleatum subsp. nucleatum (strain ATCC 25586 / DSM 15643 / BCRC 10681 / CIP 101130 / JCM 8532 / KCTC 2640 / LMG 13131 / VPI 4355).